The chain runs to 596 residues: NADH-quinone oxidoreductase subunit C/D (596 aa).

The segment at 1–186 (MTDLTAQEPA…SPFELTKAKQ (186 aa)) is NADH dehydrogenase I subunit C. An NADH dehydrogenase I subunit D region spans residues 210 to 596 (DFMFLNLGPN…IDFVMSDVDR (387 aa)).

In the N-terminal section; belongs to the complex I 30 kDa subunit family. The protein in the C-terminal section; belongs to the complex I 49 kDa subunit family. As to quaternary structure, NDH-1 is composed of 13 different subunits. Subunits NuoB, CD, E, F, and G constitute the peripheral sector of the complex.

It is found in the cell inner membrane. The catalysed reaction is a quinone + NADH + 5 H(+)(in) = a quinol + NAD(+) + 4 H(+)(out). Its function is as follows. NDH-1 shuttles electrons from NADH, via FMN and iron-sulfur (Fe-S) centers, to quinones in the respiratory chain. The immediate electron acceptor for the enzyme in this species is believed to be ubiquinone. Couples the redox reaction to proton translocation (for every two electrons transferred, four hydrogen ions are translocated across the cytoplasmic membrane), and thus conserves the redox energy in a proton gradient. The sequence is that of NADH-quinone oxidoreductase subunit C/D from Shigella flexneri serotype 5b (strain 8401).